Consider the following 433-residue polypeptide: MEDRQALEEAGEEMGFPVVNISGGGRGRRGNYSNDGSGARELSLRVNEEVTEPPYNSITYAEVLRLYRQNGFSFFLSNLHFEQIKYFEHREGEGDLGAIIREHGKIVLDPNVVYHLRRPLKIQSLCYIVGRGAVIKVHASVGQQAVHVYRQLDISPRIMGMLNVTFLECKFHWADDEGVNFERLARHFTLFFLTYESVFFACDFVGFPGLTLRSTCLLRVEGCTFTSCAVGIHHADVADLKVKACYFNHCSVCIFADGPADVLRNCATNCDCFVIMEQEGSVVGNSVVYKLPPSRADDLMICQQGYMYPLSSIHIVRNLSCEYPKLKNNVFSHVDMHVGLRQGLQHFNQCNLSFVYCMLETESVPKVSFYSSYIQTLTVAQIVQFSREHSRECQCFCGGRHRLLFPSVVHITPTVVPDRTRFTVDVEELSDDE.

This sequence belongs to the adenoviridae E1B 55 kDa protein family. In terms of assembly, interacts with host PML-4 and PML-5; this interaction promotes efficient subnuclear targeting of E1B-55K to PML nuclear bodies. Interacts with E4-ORF3 protein. Interacts with E4-ORF6 protein.

The protein resides in the host nucleus. It localises to the host cytoplasm. Its function is as follows. Plays a major role to prevent cellular inhibition of viral genome replication. Assembles an SCF-like E3 ubiquitin ligase complex based on the cellular proteins ELOB, ELOC, CUL5 and RBX1, in cooperation with viral E4orf6. This viral RING-type ligase ubiquitinates cellular substrates and targets them to proteasomal degradation: TP53/p53, LIG4, MRE11-RAD50-NBS1 (MRN) complex, ITGA3, DAXX and BLM. E1B-55K probably acts as the substrate-specific adapter of the SCF-like E3 ubiquitin ligase complex. Degradation of host TP53/p53 activity is essential for preventing E1A-induced TP53 accumulation that would otherwise lead to cell apoptosis and growth arrest. E1B-55K also inactivates TP53 transcription-factor activity by binding its transactivation domain. E1B-55K also functions as a SUMO1 E3 ligase for TP53 which causes the latter to be sequestered in promyelocytic leukemia (PML) nuclear bodies thereby contributing to maximal inhibition of TP53 function. In Murine adenovirus A serotype 1 (MAdV-1), this protein is E1B 55 kDa protein.